The primary structure comprises 232 residues: Large ribosomal subunit protein uL1 (232 aa).

It belongs to the universal ribosomal protein uL1 family. As to quaternary structure, part of the 50S ribosomal subunit.

Binds directly to 23S rRNA. The L1 stalk is quite mobile in the ribosome, and is involved in E site tRNA release. Functionally, protein L1 is also a translational repressor protein, it controls the translation of the L11 operon by binding to its mRNA. The protein is Large ribosomal subunit protein uL1 of Colwellia psychrerythraea (strain 34H / ATCC BAA-681) (Vibrio psychroerythus).